The sequence spans 196 residues: SPRY domain-containing protein 7 (196 aa).

A2 bears the N-acetylalanine mark. In terms of domain architecture, B30.2/SPRY spans 2–184 (AASAWCCLRC…FSEFYHTPPP (183 aa)).

This is SPRY domain-containing protein 7 (Spryd7) from Mus musculus (Mouse).